The sequence spans 323 residues: GTP 3',8-cyclase (323 aa).

The Radical SAM core domain occupies 4–228 (KYGRSIDYLR…VPVNIQNNGP (225 aa)). Arg-13 provides a ligand contact to GTP. Cys-20 and Cys-24 together coordinate [4Fe-4S] cluster. An S-adenosyl-L-methionine-binding site is contributed by Tyr-26. Residue Cys-27 coordinates [4Fe-4S] cluster. Arg-63 provides a ligand contact to GTP. Gly-67 contacts S-adenosyl-L-methionine. Thr-94 contributes to the GTP binding site. Residue Ser-118 participates in S-adenosyl-L-methionine binding. GTP is bound at residue Lys-155. Met-189 contributes to the S-adenosyl-L-methionine binding site. [4Fe-4S] cluster is bound by residues Cys-252 and Cys-255. 257-259 (RMR) lines the GTP pocket. Residue Cys-269 coordinates [4Fe-4S] cluster.

This sequence belongs to the radical SAM superfamily. MoaA family. As to quaternary structure, monomer and homodimer. [4Fe-4S] cluster is required as a cofactor.

It carries out the reaction GTP + AH2 + S-adenosyl-L-methionine = (8S)-3',8-cyclo-7,8-dihydroguanosine 5'-triphosphate + 5'-deoxyadenosine + L-methionine + A + H(+). It participates in cofactor biosynthesis; molybdopterin biosynthesis. Catalyzes the cyclization of GTP to (8S)-3',8-cyclo-7,8-dihydroguanosine 5'-triphosphate. The chain is GTP 3',8-cyclase from Petrotoga mobilis (strain DSM 10674 / SJ95).